A 259-amino-acid polypeptide reads, in one-letter code: Ubiquinone/menaquinone biosynthesis C-methyltransferase UbiE (259 aa).

S-adenosyl-L-methionine-binding positions include threonine 82, aspartate 103, and asparagine 131–alanine 132.

Belongs to the class I-like SAM-binding methyltransferase superfamily. MenG/UbiE family.

The catalysed reaction is a 2-demethylmenaquinol + S-adenosyl-L-methionine = a menaquinol + S-adenosyl-L-homocysteine + H(+). The enzyme catalyses a 2-methoxy-6-(all-trans-polyprenyl)benzene-1,4-diol + S-adenosyl-L-methionine = a 5-methoxy-2-methyl-3-(all-trans-polyprenyl)benzene-1,4-diol + S-adenosyl-L-homocysteine + H(+). The protein operates within quinol/quinone metabolism; menaquinone biosynthesis; menaquinol from 1,4-dihydroxy-2-naphthoate: step 2/2. It participates in cofactor biosynthesis; ubiquinone biosynthesis. Its function is as follows. Methyltransferase required for the conversion of demethylmenaquinol (DMKH2) to menaquinol (MKH2) and the conversion of 2-polyprenyl-6-methoxy-1,4-benzoquinol (DDMQH2) to 2-polyprenyl-3-methyl-6-methoxy-1,4-benzoquinol (DMQH2). The chain is Ubiquinone/menaquinone biosynthesis C-methyltransferase UbiE from Agrobacterium fabrum (strain C58 / ATCC 33970) (Agrobacterium tumefaciens (strain C58)).